The sequence spans 724 residues: NAD(+) hydrolase SARM1 (724 aa).

The N-terminal 27 residues, 1–27 (MVLTLLFSAYKLCRFFIMSGPRPGADR), are a transit peptide targeting the mitochondrion. An ARM 1 repeat occupies 60 to 100 (EVQGALERSLPELQQALSELKQASAAQAVGAGLAEVFQLVE). NAD(+)-binding positions include W103, R110, 149-157 (EQILVAENR), and 190-193 (HMFK). ARM repeat units lie at residues 114-153 (QGLC…QILV), 155-193 (ENRD…HMFK), 196-235 (EETC…NCAL), 237-280 (GGQT…LATN), 281-314 (KEVE…CLVD), 315-354 (ASDT…AEAA), and 359-402 (QGKT…EEVP). SAM domains follow at residues 412–476 (WKEA…LKTF) and 486–548 (NLAD…MLHS). Residues S548 and S558 each carry the phosphoserine modification. The 144-residue stretch at 560–703 (DTPDVFISYR…KIIRFLQGRP (144 aa)) folds into the TIR domain. Residues 569-570 (RR) and E599 contribute to the NAD(+) site. The active site involves E642. Polar residues predominate over residues 703–717 (PSQDSSAGSDTSLEG). The tract at residues 703 to 724 (PSQDSSAGSDTSLEGATSMGLP) is disordered.

Belongs to the SARM1 family. As to quaternary structure, homooctamer; forms an octameric ring via SAM domains. Interacts with TICAM1/TRIF and thereby interferes with TICAM1/TRIF function. Interacts with MAPK10/JNK3 and SDC2 (via cytoplasmic domain). Post-translationally, phosphorylation at Ser-548 by JNK kinases (MAPK8, MAPK9 and /or MAPK10) enhance the NAD(+) hydrolase (NADase) activity. Phosphorylation at Ser-548 and subsequent activation takes place in response to oxidative stress conditions and inhibits mitochondrial respiration. Phosphorylation at Ser-548 increases in response to cerebral ischemia/reperfusion (I/R) injury.

It localises to the cytoplasm. Its subcellular location is the cell projection. The protein resides in the axon. It is found in the dendrite. The protein localises to the synapse. It localises to the mitochondrion. The catalysed reaction is NAD(+) + H2O = ADP-D-ribose + nicotinamide + H(+). It catalyses the reaction NAD(+) = cyclic ADP-beta-D-ribose + nicotinamide + H(+). It carries out the reaction NADP(+) + H2O = ADP-D-ribose 2'-phosphate + nicotinamide + H(+). Its activity is regulated as follows. Autoinhibited: in the inactive state, the enzymatic TIR domain is held apart by the autoinhibiting ARM repeats. NAD(+)-binding to ARM repeats maintains an inactive state by promoting interaction between ARM repeats and the TIR domain, thereby facilitating inhibition of the enzymatic TIR domain. Following activation, possibly by nicotinamide mononucleotide (NMN), auto-inhibitory interactions are released, allowing self-association of the TIR domains and subsequent activation of the NAD(+) hydrolase (NADase) activity. Self-association of TIR domains is facilitated by the octamer of SAM domains. NAD(+) hydrolase, which plays a key role in axonal degeneration following injury by regulating NAD(+) metabolism. Acts as a negative regulator of MYD88- and TRIF-dependent toll-like receptor signaling pathway by promoting Wallerian degeneration, an injury-induced form of programmed subcellular death which involves degeneration of an axon distal to the injury site. Wallerian degeneration is triggered by NAD(+) depletion: in response to injury, SARM1 is activated and catalyzes cleavage of NAD(+) into ADP-D-ribose (ADPR), cyclic ADPR (cADPR) and nicotinamide; NAD(+) cleavage promoting cytoskeletal degradation and axon destruction. Also able to hydrolyze NADP(+), but not other NAD(+)-related molecules. Can activate neuronal cell death in response to stress. Regulates dendritic arborization through the MAPK4-JNK pathway. Involved in innate immune response: inhibits both TICAM1/TRIF- and MYD88-dependent activation of JUN/AP-1, TRIF-dependent activation of NF-kappa-B and IRF3, and the phosphorylation of MAPK14/p38. This chain is NAD(+) hydrolase SARM1, found in Rattus norvegicus (Rat).